A 749-amino-acid polypeptide reads, in one-letter code: Metabotropic glutamate receptor-like protein M (749 aa).

Positions 1–22 (MIKLILSLIFLIICCNINPSES) are cleaved as a signal peptide. Residues 23-385 (FKLITLTTGP…KIEFSSSVQK (363 aa)) are Extracellular-facing. Asn67, Asn164, Asn257, Asn271, and Asn345 each carry an N-linked (GlcNAc...) asparagine glycan. The helical transmembrane segment at 386 to 406 (GFSIVSGCLIAFVILMMVGIV) threads the bilayer. Residues 407–419 (YYKDTPSIRSASP) are Cytoplasmic-facing. A helical transmembrane segment spans residues 420 to 440 (IFLNFSLIGGIIIYIGIIIWV). The Extracellular portion of the chain corresponds to 441–456 (GPISTHQCNARFWLVT). Residues 457 to 477 (LGFSTLIGSLVVKNFRIWLIF) form a helical membrane-spanning segment. Residues 478-492 (DNPELKAIKITNYQL) are Cytoplasmic-facing. The chain crosses the membrane as a helical span at residues 493–513 (FPWVGLCLVINIVLMAILTSV). Residues 514–544 (GDLKAIEAQGIDSLGKYEYMTVCKMNSAGAS) lie on the Extracellular side of the membrane. A helical membrane pass occupies residues 545 to 565 (TLYSILAYFAALLLVGVFVSW). The Cytoplasmic segment spans residues 566–579 (KIRIVDIEEFNESK). A helical transmembrane segment spans residues 580–600 (AIANTLYAVSFCLFVIVPLMI). Residues 601–609 (SPQEKQSET) lie on the Extracellular side of the membrane. The chain crosses the membrane as a helical span at residues 610 to 630 (IILCVAGLFITTAALLIVFIP). The Cytoplasmic portion of the chain corresponds to 631–749 (KFWRVFIYGK…EEPVKTESQE (119 aa)). The interval 658–749 (ARAESLSKNS…EEPVKTESQE (92 aa)) is disordered. Positions 698–716 (SSLSEPNKPTKNNDGNVNV) are enriched in polar residues. A compositionally biased stretch (acidic residues) spans 725 to 740 (FTDDTISEFDENEVNE).

This sequence in the N-terminal section; belongs to the BMP lipoprotein family. The protein in the C-terminal section; belongs to the G-protein coupled receptor 3 family. GABA-B receptor subfamily.

The protein localises to the membrane. The chain is Metabotropic glutamate receptor-like protein M (grlM) from Dictyostelium discoideum (Social amoeba).